A 483-amino-acid polypeptide reads, in one-letter code: Glutamyl-tRNA(Gln) amidotransferase subunit A (483 aa).

Active-site charge relay system residues include Lys75 and Ser150. Catalysis depends on Ser174, which acts as the Acyl-ester intermediate.

The protein belongs to the amidase family. GatA subfamily. Heterotrimer of A, B and C subunits.

The enzyme catalyses L-glutamyl-tRNA(Gln) + L-glutamine + ATP + H2O = L-glutaminyl-tRNA(Gln) + L-glutamate + ADP + phosphate + H(+). Its function is as follows. Allows the formation of correctly charged Gln-tRNA(Gln) through the transamidation of misacylated Glu-tRNA(Gln) in organisms which lack glutaminyl-tRNA synthetase. The reaction takes place in the presence of glutamine and ATP through an activated gamma-phospho-Glu-tRNA(Gln). The sequence is that of Glutamyl-tRNA(Gln) amidotransferase subunit A from Microcystis aeruginosa (strain NIES-843 / IAM M-2473).